We begin with the raw amino-acid sequence, 110 residues long: Ribonuclease P protein component 1 (110 aa).

The protein belongs to the eukaryotic/archaeal RNase P protein component 1 family. As to quaternary structure, consists of a catalytic RNA component and at least 4-5 protein subunits.

It is found in the cytoplasm. The enzyme catalyses Endonucleolytic cleavage of RNA, removing 5'-extranucleotides from tRNA precursor.. Its function is as follows. Part of ribonuclease P, a protein complex that generates mature tRNA molecules by cleaving their 5'-ends. The polypeptide is Ribonuclease P protein component 1 (Methanosarcina barkeri (strain Fusaro / DSM 804)).